Reading from the N-terminus, the 336-residue chain is Octanoyltransferase (336 aa).

Residues 1–16 are compositionally biased toward polar residues; sequence MPKSALMSSSFQTSVS. 2 disordered regions span residues 1–22 and 48–88; these read MPKS…PLPV and QGKG…GGGR. The interval 1-92 is unknown; that stretch reads MPKSALMSSS…AAGGGRTIRD (92 aa). The lipB domain stretch occupies residues 93-336; sequence VKEAAFDVLD…GQEALSVASP (244 aa). The 195-residue stretch at 124–318 folds into the BPL/LPL catalytic domain; that stretch reads VGGRPTLLLV…AFALTFADYD (195 aa). Residues 170 to 177, 244 to 246, and 257 to 259 each bind substrate; these read RGGDVTYH, SIG, and GIG. The active-site Acyl-thioester intermediate is Cys275.

The protein in the C-terminal section; belongs to the LipB family.

The protein localises to the cytoplasm. It carries out the reaction octanoyl-[ACP] + L-lysyl-[protein] = N(6)-octanoyl-L-lysyl-[protein] + holo-[ACP] + H(+). The protein operates within protein modification; protein lipoylation via endogenous pathway; protein N(6)-(lipoyl)lysine from octanoyl-[acyl-carrier-protein]: step 1/2. Functionally, catalyzes the transfer of endogenously produced octanoic acid from octanoyl-acyl-carrier-protein onto the lipoyl domains of lipoate-dependent enzymes. Lipoyl-ACP can also act as a substrate although octanoyl-ACP is likely to be the physiological substrate. The polypeptide is Octanoyltransferase (Deinococcus radiodurans (strain ATCC 13939 / DSM 20539 / JCM 16871 / CCUG 27074 / LMG 4051 / NBRC 15346 / NCIMB 9279 / VKM B-1422 / R1)).